We begin with the raw amino-acid sequence, 448 residues long: Phosphoglucosamine mutase (448 aa).

Ser-101 (phosphoserine intermediate) is an active-site residue. Positions 101, 241, 243, and 245 each coordinate Mg(2+). The residue at position 101 (Ser-101) is a Phosphoserine.

It belongs to the phosphohexose mutase family. It depends on Mg(2+) as a cofactor. Activated by phosphorylation.

The catalysed reaction is alpha-D-glucosamine 1-phosphate = D-glucosamine 6-phosphate. Catalyzes the conversion of glucosamine-6-phosphate to glucosamine-1-phosphate. This Macrococcus caseolyticus (strain JCSC5402) (Macrococcoides caseolyticum) protein is Phosphoglucosamine mutase.